Consider the following 435-residue polypeptide: Secreted RxLR effector protein 35 (435 aa).

The signal sequence occupies residues 1–22 (MRGAYYIIIALCVVASSQVAAG). The RxLR-dEER signature appears at 48–65 (RFLRGSRVVHDDLANEER). Residues 336-357 (RPKRTTDGNTGTISLPTKPTKT) form a disordered region. The span at 342 to 354 (DGNTGTISLPTKP) shows a compositional bias: polar residues.

It belongs to the RxLR effector family.

It is found in the secreted. The protein resides in the host nucleus. Its function is as follows. Secreted effector that acts as an elicitor that induces cell death in host plant cells. The chain is Secreted RxLR effector protein 35 from Plasmopara viticola (Downy mildew of grapevine).